We begin with the raw amino-acid sequence, 276 residues long: Large ribosomal subunit protein uL2 (276 aa).

The segment at 219–268 (TVRGSVMNPNDHPHGGGEGRQPVGRKSPMTPWGKPALGLKTRNKKAKSSK) is disordered.

It belongs to the universal ribosomal protein uL2 family. As to quaternary structure, part of the 50S ribosomal subunit. Forms a bridge to the 30S subunit in the 70S ribosome.

In terms of biological role, one of the primary rRNA binding proteins. Required for association of the 30S and 50S subunits to form the 70S ribosome, for tRNA binding and peptide bond formation. It has been suggested to have peptidyltransferase activity; this is somewhat controversial. Makes several contacts with the 16S rRNA in the 70S ribosome. The sequence is that of Large ribosomal subunit protein uL2 from Lactococcus lactis subsp. cremoris (strain MG1363).